A 255-amino-acid polypeptide reads, in one-letter code: Probable cyclic nucleotide phosphodiesterase syc0937_d (255 aa).

Fe cation is bound by residues aspartate 19, histidine 21, aspartate 59, asparagine 89, histidine 157, histidine 196, and histidine 198. Residues histidine 21, aspartate 59, and asparagine 89–histidine 90 each bind AMP. Residue histidine 198 participates in AMP binding.

Belongs to the cyclic nucleotide phosphodiesterase class-III family. Fe(2+) is required as a cofactor.

This is Probable cyclic nucleotide phosphodiesterase syc0937_d from Synechococcus sp. (strain ATCC 27144 / PCC 6301 / SAUG 1402/1) (Anacystis nidulans).